We begin with the raw amino-acid sequence, 580 residues long: Arginine--tRNA ligase (580 aa).

The 'HIGH' region signature appears at Ala-131 to His-141.

It belongs to the class-I aminoacyl-tRNA synthetase family. As to quaternary structure, monomer.

It localises to the cytoplasm. The enzyme catalyses tRNA(Arg) + L-arginine + ATP = L-arginyl-tRNA(Arg) + AMP + diphosphate. The protein is Arginine--tRNA ligase of Cereibacter sphaeroides (strain ATCC 17025 / ATH 2.4.3) (Rhodobacter sphaeroides).